Consider the following 1116-residue polypeptide: Auxin response factor 21 (1116 aa).

A DNA-binding region (TF-B3) is located at residues 132–234 (FCKTLTASDT…QLLLGIRRAN (103 aa)). The disordered stretch occupies residues 763 to 812 (KTDDVPSTSTSPSTNSNPVLLQSIPSSSKNQSLTTAGKTSQSSVVLGPTI). Positions 768-780 (PSTSTSPSTNSNP) are enriched in low complexity. Polar residues predominate over residues 781–806 (VLLQSIPSSSKNQSLTTAGKTSQSSV). Positions 998-1082 (RTYTKVHKRG…RCIRILSPQE (85 aa)) constitute a PB1 domain.

The protein belongs to the ARF family. Homodimers and heterodimers. In terms of tissue distribution, expressed in roots, culms, leaves and young panicles.

It is found in the nucleus. Auxin response factors (ARFs) are transcriptional factors that bind specifically to the DNA sequence 5'-TGTCTC-3' found in the auxin-responsive promoter elements (AuxREs). This Oryza sativa subsp. japonica (Rice) protein is Auxin response factor 21 (ARF21).